The following is a 131-amino-acid chain: MEVMSHLVHWVFLAVYMYELNAELISHLHPPEQEISTDSCVFPFVYADGFHYSCISLHSDYDWCSLDFQFQGRWRYCTAQDPPKCIFPFQFKQKLIKKCTKEGYILNRSWCSLTENYNQDGKWKQCSPNNF.

The N-terminal stretch at 1-22 (MEVMSHLVHWVFLAVYMYELNA) is a signal peptide. Fibronectin type-II domains are found at residues 35–79 (ISTD…YCTA) and 80–128 (QDPP…QCSP). 4 disulfide bridges follow: Cys40-Cys64, Cys54-Cys77, Cys85-Cys111, and Cys99-Cys126.

The protein belongs to the seminal plasma protein family. As to expression, epididymis.

It is found in the secreted. Functionally, binds sperm in vitro but has no effect on sperm capacitation. Also binds gelatin and heparin, but not chondroitin sulfate B or phospholipid liposomes. The polypeptide is Binder of sperm protein homolog 2 (Mus musculus (Mouse)).